The following is a 407-amino-acid chain: MEVYLVGGAVRDKLLGIPVYDQDWVVVGATAEQMLNAGYSPVGKDFPVFLHPKTKQEYALARTERKTGQGYKGFECFFSPDVALEEDLLRRDLTINAIAMDSQGVLYDPYGGQQDLQNRILRHVSEAFVEDPLRVLRVARFAAKLAPLGFRVADETMQLMQSIVASGELSALTAERVWQEWHKSLLTPAPQQFLAVLRQCGALAVVLPEIDALFGVPQPEKWHPEIDTGIHTLLVAEQAAKLSSSAVVRFAAQVHDLGKGVTPPSEWPSHKMHCHTGLKLIKQLCERVRVPNEFRDLALMVCEQHSNIHRAAELKPQTMVKIFNKLDVWRKAERLNDILLCCQADHAGRQGLQDHPYPQAERIQLAYQAALSVEVQSIIQDGFKGPAIRDEQERRRTEAVKAALLNA.

ATP contacts are provided by G8 and R11. CTP is bound by residues G8 and R11. Mg(2+) is bound by residues D21 and D23. 3 residues coordinate ATP: R91, R137, and R140. Residues R91, R137, and R140 each contribute to the CTP site. Positions 228-329 (TGIHTLLVAE…VKIFNKLDVW (102 aa)) constitute an HD domain.

This sequence belongs to the tRNA nucleotidyltransferase/poly(A) polymerase family. Bacterial CCA-adding enzyme type 1 subfamily. As to quaternary structure, monomer. Can also form homodimers and oligomers. Requires Mg(2+) as cofactor. Ni(2+) is required as a cofactor.

The enzyme catalyses a tRNA precursor + 2 CTP + ATP = a tRNA with a 3' CCA end + 3 diphosphate. It carries out the reaction a tRNA with a 3' CCA end + 2 CTP + ATP = a tRNA with a 3' CCACCA end + 3 diphosphate. In terms of biological role, catalyzes the addition and repair of the essential 3'-terminal CCA sequence in tRNAs without using a nucleic acid template. Adds these three nucleotides in the order of C, C, and A to the tRNA nucleotide-73, using CTP and ATP as substrates and producing inorganic pyrophosphate. tRNA 3'-terminal CCA addition is required both for tRNA processing and repair. Also involved in tRNA surveillance by mediating tandem CCA addition to generate a CCACCA at the 3' terminus of unstable tRNAs. While stable tRNAs receive only 3'-terminal CCA, unstable tRNAs are marked with CCACCA and rapidly degraded. This is Multifunctional CCA protein from Vibrio vulnificus (strain CMCP6).